A 365-amino-acid polypeptide reads, in one-letter code: Chorismate synthase (365 aa).

An NADP(+)-binding site is contributed by R48. Residues 130-132, 242-243, G290, 305-309, and R331 each bind FMN; these read RSS, NA, and KPTSS.

This sequence belongs to the chorismate synthase family. Homotetramer. FMNH2 is required as a cofactor.

It carries out the reaction 5-O-(1-carboxyvinyl)-3-phosphoshikimate = chorismate + phosphate. Its pathway is metabolic intermediate biosynthesis; chorismate biosynthesis; chorismate from D-erythrose 4-phosphate and phosphoenolpyruvate: step 7/7. Catalyzes the anti-1,4-elimination of the C-3 phosphate and the C-6 proR hydrogen from 5-enolpyruvylshikimate-3-phosphate (EPSP) to yield chorismate, which is the branch point compound that serves as the starting substrate for the three terminal pathways of aromatic amino acid biosynthesis. This reaction introduces a second double bond into the aromatic ring system. In Erythrobacter litoralis (strain HTCC2594), this protein is Chorismate synthase.